The sequence spans 275 residues: Non-heme chloroperoxidase CPO-A1 (275 aa).

The AB hydrolase-1 domain occupies 22–255 (PVVFIHGWPL…KVYEGSSHGI (234 aa)). Catalysis depends on charge relay system residues S95, D224, and H253.

The protein belongs to the AB hydrolase superfamily. Bacterial non-heme haloperoxidase / perhydrolase family. As to quaternary structure, homodimer.

Its activity is regulated as follows. Brominating activity not inhibited by azide, peroxidase activity stimulated by bromide. Its function is as follows. May be a chlorinating enzyme involved in 7-chlorotetracycline biosynthesis. Able to brominate as well. This is Non-heme chloroperoxidase CPO-A1 (bpoA1) from Kitasatospora aureofaciens (Streptomyces aureofaciens).